Reading from the N-terminus, the 286-residue chain is NAD kinase (286 aa).

Catalysis depends on Asp67, which acts as the Proton acceptor. Residues Asp67–Gly68, Arg72, Asn141–Asp142, Arg152, Asp171, Thr182–Ser187, and Gln242 each bind NAD(+).

It belongs to the NAD kinase family. A divalent metal cation serves as cofactor.

It is found in the cytoplasm. It carries out the reaction NAD(+) + ATP = ADP + NADP(+) + H(+). Functionally, involved in the regulation of the intracellular balance of NAD and NADP, and is a key enzyme in the biosynthesis of NADP. Catalyzes specifically the phosphorylation on 2'-hydroxyl of the adenosine moiety of NAD to yield NADP. In Ruminiclostridium cellulolyticum (strain ATCC 35319 / DSM 5812 / JCM 6584 / H10) (Clostridium cellulolyticum), this protein is NAD kinase.